We begin with the raw amino-acid sequence, 2045 residues long: Non-reducing polyketide synthase pks27 (2045 aa).

The interval 10–247 is N-terminal acylcarrier protein transacylase domain (SAT); sequence IVFGDLTCDS…LTIPIYAPYH (238 aa). Residues 380 to 813 enclose the Ketosynthase family 3 (KS3) domain; the sequence is HSKLAIIGYS…GGNSSVLIED (434 aa). Active-site for beta-ketoacyl synthase activity residues include Cys-552, His-687, and His-731. The tract at residues 913–1213 is malonyl-CoA:ACP transacylase (MAT) domain; the sequence is FAFTGQGSQY…VPTLQRNKDT (301 aa). The segment at 1289–1422 is N-terminal hotdog fold; the sequence is HKLVEEKKDG…ASITFPDAKA (134 aa). The region spanning 1289 to 1599 is the PKS/mFAS DH domain; it reads HKLVEEKKDG…AQGVPRRLMD (311 aa). Residue His-1321 is the Proton acceptor; for dehydratase activity of the active site. The tract at residues 1442–1599 is C-terminal hotdog fold; it reads AARLNTDDRV…AQGVPRRLMD (158 aa). Asp-1511 (proton donor; for dehydratase activity) is an active-site residue. A disordered region spans residues 1612–1636; sequence APAGGTLNASQSAAANPAADPSAQA. Low complexity predominate over residues 1619–1636; the sequence is NASQSAAANPAADPSAQA. The Carrier domain maps to 1635 to 1712; it reads QADSDNWQAA…ELEAFWKQGA (78 aa). A product template (PT) domain region spans residues 1640-1709; that stretch reads NWQAALKIIS…TIKELEAFWK (70 aa). Ser-1672 is modified (O-(pantetheine 4'-phosphoryl)serine). The tract at residues 1735–1776 is disordered; it reads EAEVDQDKNSSDEDRSSLGTSSYEVISPNTTETTPEITKTSS. Positions 1739–1750 are enriched in basic and acidic residues; that stretch reads DQDKNSSDEDRS. Residues 1760–1776 show a composition bias toward low complexity; that stretch reads ISPNTTETTPEITKTSS. A thioesterase region spans residues 1798-2039; sequence TLFLLPDGSG…AKRLSEMIEG (242 aa).

Pantetheine 4'-phosphate serves as cofactor.

It participates in secondary metabolite biosynthesis. Its function is as follows. Non-reducing polyketide synthase (NRPKS); part of the gene cluster 27 that mediates the biosynthesis of asparasone A, a sclerotium-specific anthraquinone pigment important for sclerotial survival. Catalyzes the formation of the aromatic polyketide from acetyl coenzyme A and seven malonyl coenzyme A molecules. Through its product template (PT) domain, catalyzes the cyclization of polyketide backbone via C6-C11 aldolcondensation. In Aspergillus flavus (strain ATCC 200026 / FGSC A1120 / IAM 13836 / NRRL 3357 / JCM 12722 / SRRC 167), this protein is Non-reducing polyketide synthase pks27.